The following is a 728-amino-acid chain: 1,4-alpha-glucan branching enzyme GlgB (728 aa).

Catalysis depends on Asp-405, which acts as the Nucleophile. Glu-458 functions as the Proton donor in the catalytic mechanism.

This sequence belongs to the glycosyl hydrolase 13 family. GlgB subfamily. As to quaternary structure, monomer.

It catalyses the reaction Transfers a segment of a (1-&gt;4)-alpha-D-glucan chain to a primary hydroxy group in a similar glucan chain.. It participates in glycan biosynthesis; glycogen biosynthesis. Functionally, catalyzes the formation of the alpha-1,6-glucosidic linkages in glycogen by scission of a 1,4-alpha-linked oligosaccharide from growing alpha-1,4-glucan chains and the subsequent attachment of the oligosaccharide to the alpha-1,6 position. The polypeptide is 1,4-alpha-glucan branching enzyme GlgB (Escherichia coli O139:H28 (strain E24377A / ETEC)).